Reading from the N-terminus, the 398-residue chain is Stearoyl-[acyl-carrier-protein] 9-desaturase, chloroplastic (398 aa).

The transit peptide at Met-1–Met-34 directs the protein to the chloroplast. Positions Ile-46–Ser-66 are disordered. Glu-140, Glu-178, His-181, Glu-231, Glu-264, and His-267 together coordinate Fe cation.

The protein belongs to the fatty acid desaturase type 2 family. Homodimer. It depends on Fe(2+) as a cofactor.

The protein resides in the plastid. Its subcellular location is the chloroplast. The catalysed reaction is octadecanoyl-[ACP] + 2 reduced [2Fe-2S]-[ferredoxin] + O2 + 2 H(+) = (9Z)-octadecenoyl-[ACP] + 2 oxidized [2Fe-2S]-[ferredoxin] + 2 H2O. The protein operates within lipid metabolism; fatty acid metabolism. Functionally, converts stearoyl-ACP to oleoyl-ACP by introduction of a cis double bond between carbons 9 and 10 of the acyl chain. The polypeptide is Stearoyl-[acyl-carrier-protein] 9-desaturase, chloroplastic (Simmondsia chinensis (Jojoba)).